Here is a 673-residue protein sequence, read N- to C-terminus: FLYWCH-type zinc finger-containing protein 1 (673 aa).

The tract at residues 1 to 62 is disordered; the sequence is MPLPEPSEQD…SSTATLPNNT (62 aa). The residue at position 21 (Ser-21) is a Phosphoserine. Residues 47–62 are compositionally biased toward polar residues; that stretch reads VASQETSSTATLPNNT. 2 consecutive FLYWCH-type zinc fingers follow at residues 92-150 and 235-293; these read FLKT…DHCH and FLKT…SHCH. Residue Lys-110 forms a Glycyl lysine isopeptide (Lys-Gly) (interchain with G-Cter in SUMO2) linkage. Residues 147-158 show a composition bias toward basic and acidic residues; that stretch reads DHCHPPEKEGLD. Residues 147–178 form a disordered region; that stretch reads DHCHPPEKEGLDRKKRHRGRPPSSALPEGAEV. Ser-294 and Ser-339 each carry phosphoserine. Positions 351–402 are disordered; sequence LSRSKSKSKSKSRSKSKSKSRSRSRKRAKKQQESSQEPPEEDQDVDPRGPEF. The segment covering 354 to 379 has biased composition (basic residues); that stretch reads SKSKSKSKSRSKSKSKSRSRSRKRAK. 3 FLYWCH-type zinc fingers span residues 402–460, 490–548, and 581–639; these read FLKT…SHCH, FLKT…RHCH, and FLRT…SHCH. Residues 646–673 form a disordered region; that stretch reads LEALRQREKAPSAAKKKKKKKKKKKGIH. Residues 659–673 are compositionally biased toward basic residues; sequence AKKKKKKKKKKKGIH. Lys-666 is covalently cross-linked (Glycyl lysine isopeptide (Lys-Gly) (interchain with G-Cter in SUMO2)).

In terms of assembly, interacts with CTNNB1 (when unphosphorylated), perhaps preventing interaction of CTNNB1 with TCF4, and thereby regulating transcription activation; phosphorylation of CTNNB1 may inhibit the interaction.

The protein resides in the nucleus. It localises to the chromosome. The protein localises to the centromere. Transcription cofactor. Negatively regulates transcription activation by catenin beta-1 CTNNB1, perhaps acting by competing with TCF4 for CTNNB1 binding. May play a role in DNA-damage response signaling. Binds specifically to DNA sequences at peri-centromeric chromatin loci. The sequence is that of FLYWCH-type zinc finger-containing protein 1 (Flywch1) from Mus musculus (Mouse).